The chain runs to 353 residues: MDFDYENAKFSMPEKRIFDSQGTLDFQNSVAMVRIQYHLQKYITLCKGQQIPDTIKESFFTNIVVELLKRLSALIDETPPERMHSRYGNLSYRDWQTKFQNQLENWLHELLPEKYNNSIIELSYYISNAFGSKERIDYGTGHELSFLAVIICLDMLKIETIKGPALLYCFNSYYDVIQKLILTYKLEPAGSHGVWGLDDHFHFSYILGATQLLDVNTSLIPKDISNTRLMEQNSSSNLFCKSIRFINVVKSGPFSNHSPLLYNISRSVHTWHKMQQGLIKMYKVEVLNKFPVVQHFWFGTAFFPWTSYGNNHSLPIYQPAENNDDADFLTANNATTKMPPPLSTSTSRFIHRR.

The segment at 331 to 353 (ANNATTKMPPPLSTSTSRFIHRR) is disordered. Residues 343-353 (STSTSRFIHRR) are compositionally biased toward polar residues.

This sequence belongs to the PTPA-type PPIase family.

It localises to the cytoplasm. It is found in the nucleus. It catalyses the reaction [protein]-peptidylproline (omega=180) = [protein]-peptidylproline (omega=0). Its function is as follows. PPIases accelerate the folding of proteins. It catalyzes the cis-trans isomerization of proline imidic peptide bonds in oligopeptides. Acts as a regulatory subunit for PP2A-like phosphatases modulating their activity or substrate specificity, probably by inducing a conformational change in the catalytic subunit, a direct target of the PPIase. Can reactivate inactive phosphatase PP2A-phosphatase methylesterase complexes (PP2Ai) in presence of ATP and Mg(2+) by dissociating the inactive form from the complex. In Kluyveromyces lactis (strain ATCC 8585 / CBS 2359 / DSM 70799 / NBRC 1267 / NRRL Y-1140 / WM37) (Yeast), this protein is Serine/threonine-protein phosphatase 2A activator 1 (RRD1).